Reading from the N-terminus, the 73-residue chain is NADH dehydrogenase [ubiquinone] 1 beta subcomplex subunit 3-B (73 aa).

The helical transmembrane segment at Ala31–Gly48 threads the bilayer.

This sequence belongs to the complex I NDUFB3 subunit family. Complex I is composed of at least 49 different subunits.

It localises to the mitochondrion inner membrane. In terms of biological role, accessory subunit of the mitochondrial membrane respiratory chain NADH dehydrogenase (Complex I), that is believed not to be involved in catalysis. Complex I functions in the transfer of electrons from NADH to the respiratory chain. The immediate electron acceptor for the enzyme is believed to be ubiquinone. The sequence is that of NADH dehydrogenase [ubiquinone] 1 beta subcomplex subunit 3-B from Arabidopsis thaliana (Mouse-ear cress).